The primary structure comprises 293 residues: Nucleotide-binding protein BC_5156 (293 aa).

14–21 (GMSGAGKT) is a binding site for ATP. GTP is bound at residue 65–68 (DLRG).

It belongs to the RapZ-like family.

Displays ATPase and GTPase activities. The protein is Nucleotide-binding protein BC_5156 of Bacillus cereus (strain ATCC 14579 / DSM 31 / CCUG 7414 / JCM 2152 / NBRC 15305 / NCIMB 9373 / NCTC 2599 / NRRL B-3711).